A 157-amino-acid polypeptide reads, in one-letter code: Crossover junction endodeoxyribonuclease RuvC (157 aa).

Residues D7, E66, and D139 contribute to the active site. Residues D7, E66, and D139 each coordinate Mg(2+).

The protein belongs to the RuvC family. As to quaternary structure, homodimer which binds Holliday junction (HJ) DNA. The HJ becomes 2-fold symmetrical on binding to RuvC with unstacked arms; it has a different conformation from HJ DNA in complex with RuvA. In the full resolvosome a probable DNA-RuvA(4)-RuvB(12)-RuvC(2) complex forms which resolves the HJ. Mg(2+) serves as cofactor.

The protein localises to the cytoplasm. It catalyses the reaction Endonucleolytic cleavage at a junction such as a reciprocal single-stranded crossover between two homologous DNA duplexes (Holliday junction).. The RuvA-RuvB-RuvC complex processes Holliday junction (HJ) DNA during genetic recombination and DNA repair. Endonuclease that resolves HJ intermediates. Cleaves cruciform DNA by making single-stranded nicks across the HJ at symmetrical positions within the homologous arms, yielding a 5'-phosphate and a 3'-hydroxyl group; requires a central core of homology in the junction. The consensus cleavage sequence is 5'-(A/T)TT(C/G)-3'. Cleavage occurs on the 3'-side of the TT dinucleotide at the point of strand exchange. HJ branch migration catalyzed by RuvA-RuvB allows RuvC to scan DNA until it finds its consensus sequence, where it cleaves and resolves the cruciform DNA. This is Crossover junction endodeoxyribonuclease RuvC from Campylobacter curvus (strain 525.92).